Here is a 1370-residue protein sequence, read N- to C-terminus: DNA-directed RNA polymerase subunit beta (1370 aa).

Belongs to the RNA polymerase beta chain family. As to quaternary structure, the RNAP catalytic core consists of 2 alpha, 1 beta, 1 beta' and 1 omega subunit. When a sigma factor is associated with the core the holoenzyme is formed, which can initiate transcription.

The enzyme catalyses RNA(n) + a ribonucleoside 5'-triphosphate = RNA(n+1) + diphosphate. Its function is as follows. DNA-dependent RNA polymerase catalyzes the transcription of DNA into RNA using the four ribonucleoside triphosphates as substrates. This is DNA-directed RNA polymerase subunit beta from Bordetella petrii (strain ATCC BAA-461 / DSM 12804 / CCUG 43448).